The sequence spans 308 residues: Zinc finger protein unc-98 (308 aa).

C2H2-type zinc fingers lie at residues 111–133 and 139–161; these read YKCR…ERIH and YVCG…AAQH. The segment at 166–186 adopts a C2H2-type 3; degenerate zinc-finger fold; the sequence is GFKCDCGRTFFSYTEMLYHKH. The C2H2-type 4 zinc-finger motif lies at 244-266; that stretch reads YICEYCSKSYSDSRGLAYHMYSH.

Its subcellular location is the nucleus. It is found in the cytoplasm. Its function is as follows. Probable transcription factor. Required for muscle structure. Its dual subcellular localization suggests that it may function both as a muscle adhesion complex protein and as a transcription factor, or work together with transcription factors, to influence gene expression. Thought to act as a molecular bridge between unc-97 and mhc-a at the M-line of muscles, possibly in a signaling role. This is Zinc finger protein unc-98 from Caenorhabditis briggsae.